The following is a 468-amino-acid chain: Adenosylhomocysteinase (468 aa).

Positions 57, 132, and 194 each coordinate substrate. Residue 195–197 (TTT) coordinates NAD(+). Residues Lys-224 and Asp-228 each contribute to the substrate site. NAD(+)-binding positions include Asn-229, 258 to 263 (GFGDVG), Glu-281, Asn-316, 337 to 339 (IGH), and Asn-382.

Belongs to the adenosylhomocysteinase family. The cofactor is NAD(+).

The protein resides in the cytoplasm. The enzyme catalyses S-adenosyl-L-homocysteine + H2O = L-homocysteine + adenosine. The protein operates within amino-acid biosynthesis; L-homocysteine biosynthesis; L-homocysteine from S-adenosyl-L-homocysteine: step 1/1. In terms of biological role, may play a key role in the regulation of the intracellular concentration of adenosylhomocysteine. The chain is Adenosylhomocysteinase from Methylobacterium nodulans (strain LMG 21967 / CNCM I-2342 / ORS 2060).